The primary structure comprises 175 residues: UPF0178 protein GOX1710 (175 aa).

This sequence belongs to the UPF0178 family.

The polypeptide is UPF0178 protein GOX1710 (Gluconobacter oxydans (strain 621H) (Gluconobacter suboxydans)).